Here is a 357-residue protein sequence, read N- to C-terminus: NADH-quinone oxidoreductase subunit H (357 aa).

A run of 8 helical transmembrane segments spans residues leucine 26 to tryptophan 46, alanine 92 to isoleucine 112, leucine 127 to alanine 147, methionine 164 to serine 184, glycine 203 to isoleucine 223, phenylalanine 259 to leucine 279, valine 294 to phenylalanine 314, and leucine 329 to methionine 349.

Belongs to the complex I subunit 1 family. As to quaternary structure, NDH-1 is composed of 14 different subunits. Subunits NuoA, H, J, K, L, M, N constitute the membrane sector of the complex.

Its subcellular location is the cell inner membrane. It carries out the reaction a quinone + NADH + 5 H(+)(in) = a quinol + NAD(+) + 4 H(+)(out). NDH-1 shuttles electrons from NADH, via FMN and iron-sulfur (Fe-S) centers, to quinones in the respiratory chain. The immediate electron acceptor for the enzyme in this species is believed to be ubiquinone. Couples the redox reaction to proton translocation (for every two electrons transferred, four hydrogen ions are translocated across the cytoplasmic membrane), and thus conserves the redox energy in a proton gradient. This subunit may bind ubiquinone. This is NADH-quinone oxidoreductase subunit H from Janthinobacterium sp. (strain Marseille) (Minibacterium massiliensis).